Consider the following 293-residue polypeptide: tRNA pseudouridine synthase B (293 aa).

The active-site Nucleophile is the Asp40.

It belongs to the pseudouridine synthase TruB family. Type 1 subfamily.

It carries out the reaction uridine(55) in tRNA = pseudouridine(55) in tRNA. Its function is as follows. Responsible for synthesis of pseudouridine from uracil-55 in the psi GC loop of transfer RNAs. The protein is tRNA pseudouridine synthase B of Rickettsia akari (strain Hartford).